We begin with the raw amino-acid sequence, 141 residues long: uncharacterized protein (141 aa).

The region spanning 13-141 (VTKGTELEKE…LKGILDRYFK (129 aa)) is the Ferritin-like diiron domain. Fe cation is bound by residues glutamate 63, histidine 66, glutamate 125, and histidine 128.

This is an uncharacterized protein from Methanocaldococcus jannaschii (strain ATCC 43067 / DSM 2661 / JAL-1 / JCM 10045 / NBRC 100440) (Methanococcus jannaschii).